We begin with the raw amino-acid sequence, 652 residues long: Threonine--tRNA ligase (652 aa).

In terms of domain architecture, TGS spans 1-61; the sequence is MIKLKLPDGS…DRDAEVEIVT (61 aa). Residues 243 to 548 are catalytic; it reads DHRKIGREMD…LIENYEGRFP (306 aa). Zn(2+) contacts are provided by cysteine 348, histidine 399, and histidine 525.

It belongs to the class-II aminoacyl-tRNA synthetase family. In terms of assembly, homodimer. Requires Zn(2+) as cofactor.

Its subcellular location is the cytoplasm. It carries out the reaction tRNA(Thr) + L-threonine + ATP = L-threonyl-tRNA(Thr) + AMP + diphosphate + H(+). Its function is as follows. Catalyzes the attachment of threonine to tRNA(Thr) in a two-step reaction: L-threonine is first activated by ATP to form Thr-AMP and then transferred to the acceptor end of tRNA(Thr). Also edits incorrectly charged L-seryl-tRNA(Thr). This is Threonine--tRNA ligase from Parvibaculum lavamentivorans (strain DS-1 / DSM 13023 / NCIMB 13966).